We begin with the raw amino-acid sequence, 37 residues long: Cytochrome b6-f complex subunit 5 (37 aa).

The helical transmembrane segment at Leu5–Ala25 threads the bilayer.

The protein belongs to the PetG family. As to quaternary structure, the 4 large subunits of the cytochrome b6-f complex are cytochrome b6, subunit IV (17 kDa polypeptide, PetD), cytochrome f and the Rieske protein, while the 4 small subunits are PetG, PetL, PetM and PetN. The complex functions as a dimer.

The protein localises to the plastid. The protein resides in the chloroplast thylakoid membrane. Its function is as follows. Component of the cytochrome b6-f complex, which mediates electron transfer between photosystem II (PSII) and photosystem I (PSI), cyclic electron flow around PSI, and state transitions. PetG is required for either the stability or assembly of the cytochrome b6-f complex. In Pyropia yezoensis (Susabi-nori), this protein is Cytochrome b6-f complex subunit 5.